An 855-amino-acid polypeptide reads, in one-letter code: Leucine--tRNA ligase (855 aa).

Positions Pro-42–His-52 match the 'HIGH' region motif. The tract at residues Ser-292–Lys-311 is disordered. Positions Glu-293–Lys-303 are enriched in basic and acidic residues. The short motif at Lys-614–Ser-618 is the 'KMSKS' region element. Residue Lys-617 coordinates ATP.

Belongs to the class-I aminoacyl-tRNA synthetase family.

Its subcellular location is the cytoplasm. It catalyses the reaction tRNA(Leu) + L-leucine + ATP = L-leucyl-tRNA(Leu) + AMP + diphosphate. This chain is Leucine--tRNA ligase, found in Acaryochloris marina (strain MBIC 11017).